The following is a 269-amino-acid chain: Ribosomal RNA small subunit methyltransferase J (269 aa).

Residues 125-126 (ER) and aspartate 179 each bind S-adenosyl-L-methionine.

This sequence belongs to the methyltransferase superfamily. RsmJ family.

Its subcellular location is the cytoplasm. The enzyme catalyses guanosine(1516) in 16S rRNA + S-adenosyl-L-methionine = N(2)-methylguanosine(1516) in 16S rRNA + S-adenosyl-L-homocysteine + H(+). Specifically methylates the guanosine in position 1516 of 16S rRNA. This chain is Ribosomal RNA small subunit methyltransferase J, found in Pseudomonas syringae pv. syringae (strain B728a).